We begin with the raw amino-acid sequence, 177 residues long: Putative pre-16S rRNA nuclease (177 aa).

It belongs to the YqgF nuclease family.

It is found in the cytoplasm. Its function is as follows. Could be a nuclease involved in processing of the 5'-end of pre-16S rRNA. This chain is Putative pre-16S rRNA nuclease, found in Psychrobacter sp. (strain PRwf-1).